Consider the following 396-residue polypeptide: MRVLITGCGSRGDTEPLVALAARLRELGADARMCLPPDYVERCAEVGVPMVPVGRAVRAGAREPGELPPGAAEVVTEVVAEWFDKVPAAIEGCDAVVTTGLLPAAVAVRSMAEKLGIPYRYTVLSPDHLPSEQSQAERDMYNQGADRLFGDAVNSHRASIGLPPVEHLYDYGYTDQPWLAADPVLSPLRPTDLGTVQTGAWILPDERPLSAELEAFLAAGSTPVYVGFGSSSRPATADAAKMAIKAVRASGRRIVLSRGWADLVLPDDGADCFVVGEVNLQELFGRVAAAIHHDSAGTTLLAMRAGIPQIVVRRVVDNVVEQAYHADRVAELGVGVAVDGPVPTIDSLSAALDTALAPEIRARATTVADTIRADGTTVAAQLLFDAVSLEKPTVPA.

Residue 10 to 12 (SRG) participates in dTDP-beta-L-4-epi-vancosamine binding. Residues Asp-127, Gln-133, Tyr-141, and Tyr-169 each coordinate devancoaminyl-vancomycin. Residues Arg-207, Ser-230, 277–278 (EV), and 293–298 (HDSAGT) each bind dTDP-beta-L-4-epi-vancosamine.

It belongs to the glycosyltransferase 28 family.

The catalysed reaction is dTDP-beta-L-4-epi-vancosamine + devancoaminyl-vancomycin = chloroorienticin B + dTDP + H(+). It functions in the pathway antibiotic biosynthesis; vancomycin biosynthesis. Catalyzes the attachment of 4-epi-vancosamine from a TDP donor to the beta-OH-Tyr-6 of the aglycone cosubstrate in the biosynthesis of glycopeptide antibiotic chloroeremomycin, a member of the vancomycin group of antibiotics. Strongly prefers devancoaminyl-vancomycin (DVV) as substrate rather than the heptapeptide vancomycin aglycone (AGV). Acts downstream of GtfB. This chain is dTDP-epi-vancosaminyltransferase (gtfA), found in Amycolatopsis orientalis (Nocardia orientalis).